A 502-amino-acid chain; its full sequence is Nucleoside transporter 2 (502 aa).

Residues 1–30 (MTTSSDSAMVNHTPSPWYKFGFKSFAEFNT) lie on the Cytoplasmic side of the membrane. A helical membrane pass occupies residues 31 to 51 (YVTFVFLGMSIMMVASAVTSA). The Extracellular portion of the chain corresponds to 52-81 (PDFLTRYYVYATGDPDAVAETPLFWNNANT). A helical membrane pass occupies residues 82–102 (FYNAGTYVLQVLTELFSLTPF). Residues 103–111 (MRRIPLSVR) are Cytoplasmic-facing. Residues 112–132 (LFVGLGIPFAELLLIIIVPAA) traverse the membrane as a helical segment. Residues 133–137 (TIKSQ) are Extracellular-facing. A helical transmembrane segment spans residues 138–158 (HGAIAVIMVVACVGGFSKALC). Residues 159 to 178 (DSCTNALVGPFPTKFMNGAQ) are Cytoplasmic-facing. The helical transmembrane segment at 179–199 (WGLTVIALLMSIIQIILKVSM) threads the bilayer. The Extracellular portion of the chain corresponds to 200–210 (GTSFHDILTMS). The helical transmembrane segment at 211–231 (RIYFGICIGIQLFAIFELAIL) threads the bilayer. The Cytoplasmic segment spans residues 232–352 (RFNPFAQKYI…SVFKRVYPML (121 aa)). Residues 252–273 (AQNNESTLEETAPSMNEPAAGD) are disordered. A helical transmembrane segment spans residues 353 to 373 (VCVFLIYFTSLLTFPGVFFLV). Residues 374–380 (STTSGWY) lie on the Extracellular side of the membrane. Residues 381–401 (MTVIVTLFNAGDFISRMVLMF) traverse the membrane as a helical segment. At 402–408 (RPLRPSP) the chain is on the cytoplasmic side. The helical transmembrane segment at 409–429 (KVVVAGTLGRLIIIPFLVLCV) threads the bilayer. At 430–436 (RGIIRGE) the chain is on the extracellular side. The chain crosses the membrane as a helical span at residues 437 to 457 (ALPYVLITLLGLTNGYFGCMA). The Cytoplasmic segment spans residues 458–477 (CIHCPRTTTLRYAGERSLAA). Residues 478 to 498 (MLSGISIMLGLCFGSNLSLAI) traverse the membrane as a helical segment. At 499 to 502 (TLTH) the chain is on the extracellular side.

The protein belongs to the SLC29A/ENT transporter (TC 2.A.57) family.

It localises to the cell membrane. It catalyses the reaction inosine(in) = inosine(out). It carries out the reaction guanosine(in) = guanosine(out). Functionally, high affinity transporter for inosine and guanosine. This Crithidia fasciculata protein is Nucleoside transporter 2.